Consider the following 112-residue polypeptide: PTS system lactose-specific EIIA component (112 aa).

Residues 6 to 104 form the PTS EIIA type-3 domain; that stretch reads EEISMVGFAL…TRYMIRMFKR (99 aa). Residue H80 is the Tele-phosphohistidine intermediate of the active site. H80 is modified (phosphohistidine; by HPr). D83 provides a ligand contact to Mg(2+).

Homotrimer. Requires Mg(2+) as cofactor.

Its subcellular location is the cytoplasm. In terms of biological role, the phosphoenolpyruvate-dependent sugar phosphotransferase system (sugar PTS), a major carbohydrate active transport system, catalyzes the phosphorylation of incoming sugar substrates concomitantly with their translocation across the cell membrane. The enzyme II LacEF PTS system is involved in lactose transport. This chain is PTS system lactose-specific EIIA component, found in Lacticaseibacillus casei (Lactobacillus casei).